Reading from the N-terminus, the 452-residue chain is Exodeoxyribonuclease 7 large subunit (452 aa).

It belongs to the XseA family. As to quaternary structure, heterooligomer composed of large and small subunits.

It localises to the cytoplasm. It carries out the reaction Exonucleolytic cleavage in either 5'- to 3'- or 3'- to 5'-direction to yield nucleoside 5'-phosphates.. Its function is as follows. Bidirectionally degrades single-stranded DNA into large acid-insoluble oligonucleotides, which are then degraded further into small acid-soluble oligonucleotides. The protein is Exodeoxyribonuclease 7 large subunit of Bacillus cereus (strain B4264).